We begin with the raw amino-acid sequence, 319 residues long: tRNA dimethylallyltransferase (319 aa).

11–18 provides a ligand contact to ATP; sequence GPTCSGKS. 13–18 contributes to the substrate binding site; sequence TCSGKS. 2 interaction with substrate tRNA regions span residues 36–39 and 160–164; these read DSMQ and QRIAR.

The protein belongs to the IPP transferase family. Monomer. Requires Mg(2+) as cofactor.

The catalysed reaction is adenosine(37) in tRNA + dimethylallyl diphosphate = N(6)-dimethylallyladenosine(37) in tRNA + diphosphate. Its function is as follows. Catalyzes the transfer of a dimethylallyl group onto the adenine at position 37 in tRNAs that read codons beginning with uridine, leading to the formation of N6-(dimethylallyl)adenosine (i(6)A). This Granulibacter bethesdensis (strain ATCC BAA-1260 / CGDNIH1) protein is tRNA dimethylallyltransferase.